The chain runs to 352 residues: Histidine biosynthesis bifunctional protein HisB (352 aa).

The tract at residues Met1–Phe164 is histidinol-phosphatase. Asp9 functions as the Nucleophile in the catalytic mechanism. The Mg(2+) site is built by Asp9 and Asp11. Residue Asp11 is the Proton donor of the active site. Residues Cys93, His95, Cys101, and Cys103 each contribute to the Zn(2+) site. Asp130 contacts Mg(2+). Residues Arg165 to Ile352 are imidazoleglycerol-phosphate dehydratase.

It in the N-terminal section; belongs to the histidinol-phosphatase family. The protein in the C-terminal section; belongs to the imidazoleglycerol-phosphate dehydratase family. Mg(2+) is required as a cofactor. Zn(2+) serves as cofactor.

It localises to the cytoplasm. The enzyme catalyses D-erythro-1-(imidazol-4-yl)glycerol 3-phosphate = 3-(imidazol-4-yl)-2-oxopropyl phosphate + H2O. It catalyses the reaction L-histidinol phosphate + H2O = L-histidinol + phosphate. It functions in the pathway amino-acid biosynthesis; L-histidine biosynthesis; L-histidine from 5-phospho-alpha-D-ribose 1-diphosphate: step 6/9. Its pathway is amino-acid biosynthesis; L-histidine biosynthesis; L-histidine from 5-phospho-alpha-D-ribose 1-diphosphate: step 8/9. This chain is Histidine biosynthesis bifunctional protein HisB, found in Campylobacter jejuni subsp. jejuni serotype O:6 (strain 81116 / NCTC 11828).